A 228-amino-acid polypeptide reads, in one-letter code: Lipoprotein-releasing system ATP-binding protein LolD (228 aa).

Residues 7 to 228 (LNCQNLTKDY…MQDGVLRPEM (222 aa)) enclose the ABC transporter domain. 43–50 (GSSGSGKS) contributes to the ATP binding site.

Belongs to the ABC transporter superfamily. Lipoprotein translocase (TC 3.A.1.125) family. As to quaternary structure, the complex is composed of two ATP-binding proteins (LolD) and two transmembrane proteins (LolC and LolE).

It is found in the cell inner membrane. Functionally, part of the ABC transporter complex LolCDE involved in the translocation of mature outer membrane-directed lipoproteins, from the inner membrane to the periplasmic chaperone, LolA. Responsible for the formation of the LolA-lipoprotein complex in an ATP-dependent manner. This Mannheimia succiniciproducens (strain KCTC 0769BP / MBEL55E) protein is Lipoprotein-releasing system ATP-binding protein LolD.